Here is a 95-residue protein sequence, read N- to C-terminus: Aspartyl/glutamyl-tRNA(Asn/Gln) amidotransferase subunit C (95 aa).

The protein belongs to the GatC family. In terms of assembly, heterotrimer of A, B and C subunits.

The enzyme catalyses L-glutamyl-tRNA(Gln) + L-glutamine + ATP + H2O = L-glutaminyl-tRNA(Gln) + L-glutamate + ADP + phosphate + H(+). The catalysed reaction is L-aspartyl-tRNA(Asn) + L-glutamine + ATP + H2O = L-asparaginyl-tRNA(Asn) + L-glutamate + ADP + phosphate + 2 H(+). Allows the formation of correctly charged Asn-tRNA(Asn) or Gln-tRNA(Gln) through the transamidation of misacylated Asp-tRNA(Asn) or Glu-tRNA(Gln) in organisms which lack either or both of asparaginyl-tRNA or glutaminyl-tRNA synthetases. The reaction takes place in the presence of glutamine and ATP through an activated phospho-Asp-tRNA(Asn) or phospho-Glu-tRNA(Gln). The sequence is that of Aspartyl/glutamyl-tRNA(Asn/Gln) amidotransferase subunit C from Pseudomonas putida (strain ATCC 700007 / DSM 6899 / JCM 31910 / BCRC 17059 / LMG 24140 / F1).